Consider the following 161-residue polypeptide: Phosphopantetheine adenylyltransferase (161 aa).

T9 provides a ligand contact to substrate. ATP is bound by residues 9-10 (TF) and H17. 3 residues coordinate substrate: K41, L73, and R87. Residues 88–90 (GLR), E98, and 123–129 (YQFISGT) contribute to the ATP site.

Belongs to the bacterial CoaD family. In terms of assembly, homohexamer. Mg(2+) serves as cofactor.

The protein resides in the cytoplasm. It carries out the reaction (R)-4'-phosphopantetheine + ATP + H(+) = 3'-dephospho-CoA + diphosphate. It participates in cofactor biosynthesis; coenzyme A biosynthesis; CoA from (R)-pantothenate: step 4/5. Reversibly transfers an adenylyl group from ATP to 4'-phosphopantetheine, yielding dephospho-CoA (dPCoA) and pyrophosphate. The sequence is that of Phosphopantetheine adenylyltransferase from Cupriavidus pinatubonensis (strain JMP 134 / LMG 1197) (Cupriavidus necator (strain JMP 134)).